Here is a 546-residue protein sequence, read N- to C-terminus: MPQSTDLPAWRTLSEHFKTIAPRHMRDMFADDPGRFEAFSVRLGDLLFDYSKNRITRETVATLIQLAEEAGLREKIDAMFRGERLNVTENRAVLHVALRNRSNRPIRVDGKDVMPEVNRVLDRMRRFSQSVRTGEWRGATGKAITDVVNIGIGGSDLGPKMVVKALQPYADPRLRAHFVSNVDESDLVEILRPLNPETTLFVVASKTFTTQETMTNGRSARAWFLERISDESAIARHFVAISTNRNKVAEFGIDPRNMFEFWDWVGGRYSLWSAIGLPIALSVGMDRFEELLEGAHFVDEHFRTAPFERNIPVLMGLLGIWYINFFGAQSHAVLPYDQYLEDLPAHLQQADMESNGKTVDVEGRPVNYSTGPVIFGQPGTNGQHAFYQLLHQGSMLVPCDFLAAAESHHPLAEHHDILISNFLAQTEALMRGRTTDEARQEIASEELPPERLEALAAAKTFPGNKPTNSFLYRRLDPHTLGMLIALYEHKIFTQGVIWYINSFDQMGVELGKQLAKTILAELPGDAPVASHDASTNGLIRYFKSLR.

Residue Glu353 is the Proton donor of the active site. Active-site residues include His384 and Lys512.

The protein belongs to the GPI family.

Its subcellular location is the cytoplasm. The catalysed reaction is alpha-D-glucose 6-phosphate = beta-D-fructose 6-phosphate. It participates in carbohydrate biosynthesis; gluconeogenesis. The protein operates within carbohydrate degradation; glycolysis; D-glyceraldehyde 3-phosphate and glycerone phosphate from D-glucose: step 2/4. In terms of biological role, catalyzes the reversible isomerization of glucose-6-phosphate to fructose-6-phosphate. The chain is Glucose-6-phosphate isomerase from Methylococcus capsulatus (strain ATCC 33009 / NCIMB 11132 / Bath).